The sequence spans 122 residues: Large ribosomal subunit protein uL14 (122 aa).

Belongs to the universal ribosomal protein uL14 family. Part of the 50S ribosomal subunit. Forms a cluster with proteins L3 and L19. In the 70S ribosome, L14 and L19 interact and together make contacts with the 16S rRNA in bridges B5 and B8.

Functionally, binds to 23S rRNA. Forms part of two intersubunit bridges in the 70S ribosome. The protein is Large ribosomal subunit protein uL14 of Streptomyces avermitilis (strain ATCC 31267 / DSM 46492 / JCM 5070 / NBRC 14893 / NCIMB 12804 / NRRL 8165 / MA-4680).